A 505-amino-acid chain; its full sequence is Prenylcysteine oxidase 1 (505 aa).

Positions 1–27 (MGRVVAELVSSLLGLWLLLCSCGCPEG) are cleaved as a signal peptide. N-linked (GlcNAc...) asparagine glycans are attached at residues N196, N323, and N353.

The protein belongs to the prenylcysteine oxidase family. FAD is required as a cofactor.

The protein resides in the lysosome. The enzyme catalyses an S-polyprenyl-L-cysteine + O2 + H2O = a polyprenal + L-cysteine + H2O2. It catalyses the reaction S-(2E,6E)-farnesyl-L-cysteine + O2 + H2O = (2E,6E)-farnesal + L-cysteine + H2O2. The catalysed reaction is [(2E,6E,10E)-geranylgeranyl]-L-cysteine + O2 + H2O = (2E,6E,10E)-geranylgeranial + L-cysteine + H2O2. Its function is as follows. Prenylcysteine oxidase that cleaves the thioether bond of prenyl-L-cysteines, such as farnesylcysteine and geranylgeranylcysteine. Only active against free prenylcysteines and not prenylcysteine residues within prenylated proteins or peptides. Involved in the final step in the degradation of prenylated proteins, by degrading prenylcysteines after the protein has been degraded. This Pongo abelii (Sumatran orangutan) protein is Prenylcysteine oxidase 1.